The following is a 137-amino-acid chain: Universal stress protein in QAH/OAS sulfhydrylase 3'region (137 aa).

This sequence belongs to the universal stress protein A family.

The protein is Universal stress protein in QAH/OAS sulfhydrylase 3'region of Thermus aquaticus.